Consider the following 149-residue polypeptide: Transthyretin (149 aa).

The N-terminal stretch at 1–20 (MAFHSLLLLCLAGLAFVSET) is a signal peptide. Position 32 is a sulfocysteine (Cys-32). An L-thyroxine-binding site is contributed by Lys-37. A 4-carboxyglutamate modification is found at Glu-64. L-thyroxine contacts are provided by Glu-76 and Ser-139.

Belongs to the transthyretin family. Homotetramer. Dimer of dimers. In the homotetramer, subunits assemble around a central channel that can accommodate two ligand molecules. Interacts with RBP4. Post-translationally, sulfonation of the reactive cysteine Cys-32 enhances the stability of the native conformation of TTR, avoiding misassembly of the protein leading to amyloid formation.

It localises to the secreted. Functionally, thyroid hormone-binding protein. Probably transports thyroxine from the bloodstream to the brain. This Notamacropus eugenii (Tammar wallaby) protein is Transthyretin (TTR).